The following is a 492-amino-acid chain: Forkhead box protein O6 (492 aa).

4 disordered regions span residues 1-76, 163-235, 315-338, and 466-492; these read MAAK…EVGP, SWWM…ASPA, GAGL…APRP, and FNFD…WVPG. A DNA-binding region (fork-head) is located at residues 88 to 182; the sequence is WGNLSYADLI…KTGKTPRRRA (95 aa). Phosphoserine is present on Ser-184. Basic residues predominate over residues 192 to 203; it reads LRIKGKASKKKQ. Residues 225 to 235 are compositionally biased toward low complexity; that stretch reads PAAAKWAASPA. The segment covering 472–486 has biased composition (pro residues); the sequence is LPPPPPGLAGAPPPN.

Phosphorylation of Ser-184 is be important in regulating the transacriptional activity.

The protein localises to the cytoplasm. The protein resides in the nucleus. Its function is as follows. Transcriptional activator. In Homo sapiens (Human), this protein is Forkhead box protein O6 (FOXO6).